The chain runs to 158 residues: MSKIPLTIRGAEKLREELHRLKHEDRPRVIQAIAEAREHGDLKENAEYHAAREQQSFIEGRIQEIEGKLSNAQIIDPAAVQAAPKIVFGATVALEDTDTEETVTYQIVGEDEADIKQHLISVNSPIARALIGKEEGDEAVVQAPGGERTYEIVEVRYE.

The stretch at 53 to 73 forms a coiled coil; it reads EQQSFIEGRIQEIEGKLSNAQ.

This sequence belongs to the GreA/GreB family.

In terms of biological role, necessary for efficient RNA polymerase transcription elongation past template-encoded arresting sites. The arresting sites in DNA have the property of trapping a certain fraction of elongating RNA polymerases that pass through, resulting in locked ternary complexes. Cleavage of the nascent transcript by cleavage factors such as GreA or GreB allows the resumption of elongation from the new 3'terminus. GreA releases sequences of 2 to 3 nucleotides. The protein is Transcription elongation factor GreA of Halorhodospira halophila (strain DSM 244 / SL1) (Ectothiorhodospira halophila (strain DSM 244 / SL1)).